Here is a 412-residue protein sequence, read N- to C-terminus: MEKAILIRFGDLVLKGKNKPKFIGQIKKNIRSKLKNVNVEYTFQHDRIYVHFNEVDSDEVIKQLGYVSGIHSFSYIYKTTKDIESIAQLAKEVIQKEVKLPTTFKIETKRTDKNYPLKSLEISQKVASLVLPSFDGLKVEVRNPETVLDIELRSEGTYIYVGKIPALGGFPIGLGGKGLVMLSGGIDSPVAAHLMMKQGIDVELFHFESTPLTPLESVQKVIEIAKKLAYYTPYNKIKLHLVPFTKIHEAILSYVADPYIITIMRRMFYRLGEIYANQHGLDTLINGESVGQVASQTLSSIKVIENVTSIPILRPVITYDKNDIINISKKIDTYDISILPFNDCCSIYVPRNPVTKPTIDQALKEESRFEFKELLEDALKNVQTMIITPTTDFEIALHGFDVKDALSSYTQE.

The THUMP domain occupies 58 to 163; it reads DEVIKQLGYV…SEGTYIYVGK (106 aa). Residues 181–182, 206–207, Arg-265, Gly-287, and Gln-296 contribute to the ATP site; these read ML and HF.

It belongs to the ThiI family.

It localises to the cytoplasm. The enzyme catalyses [ThiI sulfur-carrier protein]-S-sulfanyl-L-cysteine + a uridine in tRNA + 2 reduced [2Fe-2S]-[ferredoxin] + ATP + H(+) = [ThiI sulfur-carrier protein]-L-cysteine + a 4-thiouridine in tRNA + 2 oxidized [2Fe-2S]-[ferredoxin] + AMP + diphosphate. It catalyses the reaction [ThiS sulfur-carrier protein]-C-terminal Gly-Gly-AMP + S-sulfanyl-L-cysteinyl-[cysteine desulfurase] + AH2 = [ThiS sulfur-carrier protein]-C-terminal-Gly-aminoethanethioate + L-cysteinyl-[cysteine desulfurase] + A + AMP + 2 H(+). It functions in the pathway cofactor biosynthesis; thiamine diphosphate biosynthesis. Its function is as follows. Catalyzes the ATP-dependent transfer of a sulfur to tRNA to produce 4-thiouridine in position 8 of tRNAs, which functions as a near-UV photosensor. Also catalyzes the transfer of sulfur to the sulfur carrier protein ThiS, forming ThiS-thiocarboxylate. This is a step in the synthesis of thiazole, in the thiamine biosynthesis pathway. The sulfur is donated as persulfide by IscS. This Acholeplasma laidlawii (strain PG-8A) protein is Probable tRNA sulfurtransferase.